The chain runs to 240 residues: Uridylate kinase (240 aa).

Lys14–Gly17 contributes to the ATP binding site. Residue Gly56 participates in UMP binding. ATP is bound by residues Gly57 and Arg61. UMP-binding positions include Asp76 and Thr137–Thr144. ATP contacts are provided by Thr164, Tyr170, and Asp173.

The protein belongs to the UMP kinase family. Homohexamer.

It localises to the cytoplasm. It carries out the reaction UMP + ATP = UDP + ADP. It participates in pyrimidine metabolism; CTP biosynthesis via de novo pathway; UDP from UMP (UMPK route): step 1/1. Its activity is regulated as follows. Inhibited by UTP. Functionally, catalyzes the reversible phosphorylation of UMP to UDP. The sequence is that of Uridylate kinase from Paracidovorax citrulli (strain AAC00-1) (Acidovorax citrulli).